The sequence spans 435 residues: Histidinol dehydrogenase (435 aa).

Residues Tyr-131, Gln-189, and Asn-212 each coordinate NAD(+). Residues Ser-238, Gln-260, and His-263 each coordinate substrate. Residues Gln-260 and His-263 each contribute to the Zn(2+) site. Active-site proton acceptor residues include Glu-327 and His-328. 4 residues coordinate substrate: His-328, Asp-361, Glu-415, and His-420. Residue Asp-361 coordinates Zn(2+). His-420 lines the Zn(2+) pocket.

Belongs to the histidinol dehydrogenase family. Homodimer. Zn(2+) serves as cofactor.

It catalyses the reaction L-histidinol + 2 NAD(+) + H2O = L-histidine + 2 NADH + 3 H(+). The protein operates within amino-acid biosynthesis; L-histidine biosynthesis; L-histidine from 5-phospho-alpha-D-ribose 1-diphosphate: step 9/9. Functionally, catalyzes the sequential NAD-dependent oxidations of L-histidinol to L-histidinaldehyde and then to L-histidine. In Buchnera aphidicola subsp. Schizaphis graminum (strain Sg), this protein is Histidinol dehydrogenase (hisD).